A 269-amino-acid chain; its full sequence is Subtilisin BL (269 aa).

Glutamine 2 is a binding site for Ca(2+). Positions 5 to 268 (PWGISRVQAP…SGLVNAEAAT (264 aa)) constitute a Peptidase S8 domain. The active-site Charge relay system is the aspartate 32. Aspartate 40 serves as a coordination point for Ca(2+). The active-site Charge relay system is histidine 62. Leucine 73, asparagine 75, isoleucine 77, valine 79, alanine 163, tyrosine 165, and alanine 168 together coordinate Ca(2+). Residue serine 215 is the Charge relay system of the active site.

This sequence belongs to the peptidase S8 family. Ca(2+) is required as a cofactor.

The protein localises to the secreted. It catalyses the reaction Hydrolysis of proteins with broad specificity for peptide bonds, and a preference for a large uncharged residue in P1. Hydrolyzes peptide amides.. In terms of biological role, subtilisin is an extracellular alkaline serine protease, it catalyzes the hydrolysis of proteins and peptide amides. This chain is Subtilisin BL, found in Lederbergia lenta (Bacillus lentus).